Here is a 787-residue protein sequence, read N- to C-terminus: Elongation factor G-1, chloroplastic (787 aa).

The transit peptide at 1-86 (MAAESSLRVA…PRRNFSVFAM (86 aa)) directs the protein to the chloroplast. A compositionally biased stretch (polar residues) spans 14-24 (LCNLNGSQRRP). Positions 14-34 (LCNLNGSQRRPTTTTLSPLRF) are disordered. The region spanning 98–373 (KDYRNIGIMA…AVVDYLPSPL (276 aa)) is the tr-type G domain. Residues 107–114 (AHIDAGKT), 171–175 (DTPGH), and 225–228 (NKMD) contribute to the GTP site.

The protein belongs to the TRAFAC class translation factor GTPase superfamily. Classic translation factor GTPase family. EF-G/EF-2 subfamily.

It is found in the plastid. Its subcellular location is the chloroplast. The protein operates within protein biosynthesis; polypeptide chain elongation. Functionally, chloroplast-localized elongation factor EF-G involved in protein synthesis in plastids. Catalyzes the GTP-dependent ribosomal translocation step during translation elongation. During this step, the ribosome changes from the pre-translocational (PRE) to the post-translocational (POST) state as the newly formed A-site-bound peptidyl-tRNA and P-site-bound deacylated tRNA move to the P and E sites, respectively. Catalyzes the coordinated movement of the two tRNA molecules, the mRNA and conformational changes in the ribosome. The protein is Elongation factor G-1, chloroplastic (fusA1) of Glycine max (Soybean).